Reading from the N-terminus, the 125-residue chain is Large ribosomal subunit protein bL19 (125 aa).

Belongs to the bacterial ribosomal protein bL19 family.

Its function is as follows. This protein is located at the 30S-50S ribosomal subunit interface and may play a role in the structure and function of the aminoacyl-tRNA binding site. This Ehrlichia ruminantium (strain Gardel) protein is Large ribosomal subunit protein bL19.